Here is a 386-residue protein sequence, read N- to C-terminus: Bifunctional enzyme IspD/IspF (386 aa).

Residues 1 to 225 (MYNFVTLSIL…SCLSAPSSDT (225 aa)) form a 2-C-methyl-D-erythritol 4-phosphate cytidylyltransferase region. The tract at residues 226 to 386 (LSGVGFDVHA…NLKYFDWTKI (161 aa)) is 2-C-methyl-D-erythritol 2,4-cyclodiphosphate synthase. The a divalent metal cation site is built by Asp232 and His234. Residues 232–234 (DVH) and 258–259 (HS) each bind 4-CDP-2-C-methyl-D-erythritol 2-phosphate. His266 serves as a coordination point for a divalent metal cation. 4-CDP-2-C-methyl-D-erythritol 2-phosphate-binding positions include 280 to 282 (DIG), 285 to 289 (FPDND), 356 to 359 (TTTE), Phe363, and Arg366.

In the N-terminal section; belongs to the IspD/TarI cytidylyltransferase family. IspD subfamily. It in the C-terminal section; belongs to the IspF family. It depends on a divalent metal cation as a cofactor.

It carries out the reaction 2-C-methyl-D-erythritol 4-phosphate + CTP + H(+) = 4-CDP-2-C-methyl-D-erythritol + diphosphate. The catalysed reaction is 4-CDP-2-C-methyl-D-erythritol 2-phosphate = 2-C-methyl-D-erythritol 2,4-cyclic diphosphate + CMP. The protein operates within isoprenoid biosynthesis; isopentenyl diphosphate biosynthesis via DXP pathway; isopentenyl diphosphate from 1-deoxy-D-xylulose 5-phosphate: step 2/6. It participates in isoprenoid biosynthesis; isopentenyl diphosphate biosynthesis via DXP pathway; isopentenyl diphosphate from 1-deoxy-D-xylulose 5-phosphate: step 4/6. Bifunctional enzyme that catalyzes the formation of 4-diphosphocytidyl-2-C-methyl-D-erythritol from CTP and 2-C-methyl-D-erythritol 4-phosphate (MEP) (IspD), and catalyzes the conversion of 4-diphosphocytidyl-2-C-methyl-D-erythritol 2-phosphate (CDP-ME2P) to 2-C-methyl-D-erythritol 2,4-cyclodiphosphate (ME-CPP) with a corresponding release of cytidine 5-monophosphate (CMP) (IspF). This is Bifunctional enzyme IspD/IspF from Sulfurimonas denitrificans (strain ATCC 33889 / DSM 1251) (Thiomicrospira denitrificans (strain ATCC 33889 / DSM 1251)).